A 410-amino-acid polypeptide reads, in one-letter code: 26S proteasome non-ATPase regulatory subunit 6 (410 aa).

Residues 207-382 (DFAGAADLFL…GVIEVNHRDS (176 aa)) form the PCI domain.

This sequence belongs to the proteasome subunit S10 family. Expressed in multiple tissues including the intestine, pharynx and hypodermis.

Functionally, acts as a regulatory subunit of the 26S proteasome which is involved in the ATP-dependent degradation of ubiquitinated proteins. The chain is 26S proteasome non-ATPase regulatory subunit 6 (rpn-7) from Caenorhabditis elegans.